A 438-amino-acid chain; its full sequence is 23S rRNA (uracil(1939)-C(5))-methyltransferase RlmD (438 aa).

The TRAM domain maps to 10–69 (KASVNTKHLSVDVVRLDHNSAGIAFVDKKPVFIEGALPEEQAIIQFIEQKKQYSRAKLIK). [4Fe-4S] cluster contacts are provided by Cys-82, Cys-88, Cys-91, and Cys-169. S-adenosyl-L-methionine is bound by residues Gln-272, Phe-301, Asn-306, Glu-322, Asn-349, and Asp-370. Cys-396 functions as the Nucleophile in the catalytic mechanism.

It belongs to the class I-like SAM-binding methyltransferase superfamily. RNA M5U methyltransferase family. RlmD subfamily.

It carries out the reaction uridine(1939) in 23S rRNA + S-adenosyl-L-methionine = 5-methyluridine(1939) in 23S rRNA + S-adenosyl-L-homocysteine + H(+). Its function is as follows. Catalyzes the formation of 5-methyl-uridine at position 1939 (m5U1939) in 23S rRNA. The polypeptide is 23S rRNA (uracil(1939)-C(5))-methyltransferase RlmD (Aliivibrio salmonicida (strain LFI1238) (Vibrio salmonicida (strain LFI1238))).